Reading from the N-terminus, the 325-residue chain is GMP reductase (325 aa).

C174 serves as the catalytic Thioimidate intermediate. 203–226 (IIADGGIRTHGDIAKSIRFGATMV) provides a ligand contact to NADP(+).

The protein belongs to the IMPDH/GMPR family. GuaC type 2 subfamily.

It catalyses the reaction IMP + NH4(+) + NADP(+) = GMP + NADPH + 2 H(+). Functionally, catalyzes the irreversible NADPH-dependent deamination of GMP to IMP. It functions in the conversion of nucleobase, nucleoside and nucleotide derivatives of G to A nucleotides, and in maintaining the intracellular balance of A and G nucleotides. The chain is GMP reductase from Helicobacter pylori (strain G27).